The chain runs to 150 residues: Small ribosomal subunit protein uS19y (150 aa).

It belongs to the universal ribosomal protein uS19 family.

Its subcellular location is the cytoplasm. This Arabidopsis thaliana (Mouse-ear cress) protein is Small ribosomal subunit protein uS19y (RPS15C).